Consider the following 420-residue polypeptide: Zinc finger protein Pegasus (420 aa).

A Glycyl lysine isopeptide (Lys-Gly) (interchain with G-Cter in SUMO2) cross-link involves residue K5. 3 consecutive C2H2-type zinc fingers follow at residues 82–104 (LKCR…IRIH), 110–132 (HRCH…MRSH), and 138–161 (YKCE…RRKH). A Glycyl lysine isopeptide (Lys-Gly) (interchain with G-Cter in SUMO2) cross-link involves residue K185. Polar residues-rich tracts occupy residues 223 to 236 (QTDS…TTPT) and 262 to 273 (LSSLPPENQNPA). Disordered regions lie at residues 223–247 (QTDS…QELM) and 262–356 (LSSL…PALP). Residues 290 to 311 (QPSTQAVVSAVSASIPQSSSPT) show a composition bias toward low complexity. Positions 332–349 (SEPSAHTSTPSIGNSQPS) are enriched in polar residues. A C2H2-type 4; degenerate zinc finger spans residues 364-387 (HHCQHCDMYFFADNILYTIHMGCH). The C2H2-type 5 zinc finger occupies 393–417 (FQCNICGCKCKNKYDFACHFARGQH).

This sequence belongs to the Ikaros C2H2-type zinc-finger protein family. In terms of assembly, self-associates. Interacts with other family members; IKZF1, IKZF2, IKZF3 and IKZF4.

Its subcellular location is the nucleus. Transcriptional repressor that binds the core 5'GNNTGTNG-3' DNA consensus sequence. Involved in megakaryocyte differentiation. The protein is Zinc finger protein Pegasus (IKZF5) of Pongo abelii (Sumatran orangutan).